A 246-amino-acid chain; its full sequence is MSVISMKQLLEAGVHFGHQTRRWNPKMKRYIFTERNGIYIIDLQKTVKKVEEAYNFTKNLAAEGGKILFVGTKKQAQDSVKEEAVRSGMYYVNQRWLGGTLTNFETIQKRIKRLKDIEKMQENGTFEVLPKKEVVQLKKELERLEKFLGGIKDMKDLPDALFIIDPRKERIAVAEARKLNIPIIGIVDTNCDPDEIDVVIPANDDAIRAVKLLTSKMADAILEAKQGEEEAEAAEETAPETETTTA.

The segment at 224–246 (AKQGEEEAEAAEETAPETETTTA) is disordered. Over residues 229 to 239 (EEAEAAEETAP) the composition is skewed to acidic residues.

It belongs to the universal ribosomal protein uS2 family.

The chain is Small ribosomal subunit protein uS2 from Bacillus velezensis (strain DSM 23117 / BGSC 10A6 / LMG 26770 / FZB42) (Bacillus amyloliquefaciens subsp. plantarum).